Consider the following 707-residue polypeptide: MTRRTSIERYRNIGISAHIDAGKTTTTERILFYTGITHKLGEVHEGAATMDWMEQEQERGITITSAATTAFWRGMAGNYPEHRINIIDTPGHVDFTIEVERSMRVLDGACMVYDSVGGVQPQSETVWRQANKYGVPRIAFVNKMDRVGADFFRVQRQIVERLKGDAVPIQIPVGAEDHFEGVVDLVKMKAIIWDDASQGVRFEYRDIPPELQAQAEQWREKMIEKAAEANEALLEKYLSGQPLSEDEIKSGLRARTVANEIVPMLCGSAFKNKGVQAMLDAVIDYLPSPADVPAIIGHDERDREIERHPADDEPFSALAFKIMTDPFVGQLVFFRVYSGVVKSGDSVLNPLKSKKERLGRILQMHANERREISEVYAGDIAAAVGIKEITTGDTLTDPAHVIILERMTFPEPVISQAVEPRTKADQEKMGIALNRLAQEDPSFRVRTDEESGQTIISGMGELHLEILVDRMKREFGVEANVGKPQVAYRETIRSTVTDVEGKFVKQSGGRGQYGHVVLKLEPQEQGKGYEFVDAIKGGVVPREFIPAVDRGVRETLNTGVLAGYPVVDVKVTLVFGSYHDVDSNENAFRMAASMAFKEGMRRAKPVLLEPMMHVEVETPEDFTGNVMGDLSSRRGMVQGMEDIAGGGGKLVRAEVPLAEMFGYSTSLRSLTQGRATYSMEFKHYAEAPRQVAEQIIAARGSGAAARG.

The tr-type G domain occupies 8–290 (ERYRNIGISA…AVIDYLPSPA (283 aa)). Residues 17 to 24 (AHIDAGKT), 88 to 92 (DTPGH), and 142 to 145 (NKMD) contribute to the GTP site.

This sequence belongs to the TRAFAC class translation factor GTPase superfamily. Classic translation factor GTPase family. EF-G/EF-2 subfamily.

The protein resides in the cytoplasm. Functionally, catalyzes the GTP-dependent ribosomal translocation step during translation elongation. During this step, the ribosome changes from the pre-translocational (PRE) to the post-translocational (POST) state as the newly formed A-site-bound peptidyl-tRNA and P-site-bound deacylated tRNA move to the P and E sites, respectively. Catalyzes the coordinated movement of the two tRNA molecules, the mRNA and conformational changes in the ribosome. The protein is Elongation factor G 2 of Bordetella bronchiseptica (strain ATCC BAA-588 / NCTC 13252 / RB50) (Alcaligenes bronchisepticus).